We begin with the raw amino-acid sequence, 141 residues long: Small ribosomal subunit protein uS11 (141 aa).

Belongs to the universal ribosomal protein uS11 family. As to quaternary structure, part of the 30S ribosomal subunit.

Functionally, located on the platform of the 30S subunit. The sequence is that of Small ribosomal subunit protein uS11 from Pyrobaculum calidifontis (strain DSM 21063 / JCM 11548 / VA1).